A 680-amino-acid chain; its full sequence is DNA ligase 1 (680 aa).

NAD(+) is bound by residues 35–39 (DAEYD), 84–85 (SL), and Asp-115. Lys-117 acts as the N6-AMP-lysine intermediate in catalysis. NAD(+) is bound by residues Arg-138, Glu-175, Lys-295, and Lys-319. Zn(2+) is bound by residues Cys-413, Cys-416, Cys-431, and Cys-436. The BRCT domain occupies 599-680 (REGSQLQGLK…FANLLKGLDR (82 aa)).

The protein belongs to the NAD-dependent DNA ligase family. LigA subfamily. Mg(2+) is required as a cofactor. It depends on Mn(2+) as a cofactor.

It catalyses the reaction NAD(+) + (deoxyribonucleotide)n-3'-hydroxyl + 5'-phospho-(deoxyribonucleotide)m = (deoxyribonucleotide)n+m + AMP + beta-nicotinamide D-nucleotide.. Functionally, DNA ligase that catalyzes the formation of phosphodiester linkages between 5'-phosphoryl and 3'-hydroxyl groups in double-stranded DNA using NAD as a coenzyme and as the energy source for the reaction. It is essential for DNA replication and repair of damaged DNA. This Nitratidesulfovibrio vulgaris (strain DP4) (Desulfovibrio vulgaris) protein is DNA ligase 1.